A 238-amino-acid polypeptide reads, in one-letter code: MKIFICEDDPKQRENMVTIIKNYIMIEEKPMEIALATDNPYEVLEQAKNMNDIGCYFLDIQLSTDINGIKLGSEIRKHDPVGNIIFVTSHSELTYLTFVYKVAAMDFIFKDDPAELRTRIIDCLETAHTRLQLLSKDNSVETIELKRGSNSVYVQYDDIMFFESSTKSHRLIAHLDNRQIEFYGNLKELSQLDDRFFRCHNSFVVNRHNIESIDSKERIVYFKNKEHCYASVRNVKKI.

A Response regulatory domain is found at 2–125 (KIFICEDDPK…LRTRIIDCLE (124 aa)). 4-aspartylphosphate is present on Asp59. Residues 143–238 (IELKRGSNSV…YASVRNVKKI (96 aa)) enclose the HTH LytTR-type domain.

It is found in the cytoplasm. In terms of biological role, required for high-level post-exponential phase expression of a series of secreted proteins. The sequence is that of Accessory gene regulator A (agrA) from Staphylococcus aureus (strain COL).